Consider the following 420-residue polypeptide: Innexin-3 (420 aa).

The next 4 helical transmembrane spans lie at 33–53, 104–124, 193–213, and 278–298; these read ATLL…GSAI, WVPI…WIWS, MLYI…FIIL, and IYLF…INTL. A disordered region spans residues 378 to 405; it reads NRDFHHGHSTKSTSPGLEEGHHEHLYTP. Positions 395–405 are enriched in basic and acidic residues; it reads EEGHHEHLYTP.

It belongs to the pannexin family. Interacts with F-actin. In terms of tissue distribution, evenly distributed along the adjoining membranes of the two pm5 pharyngeal muscle cells.

The protein resides in the cell membrane. It localises to the cell junction. Its subcellular location is the gap junction. Its function is as follows. Structural component of gap junctions. Plays a role in maintaining gap junction activity to promote phayngeal muscle contraction. This Caenorhabditis elegans protein is Innexin-3.